The chain runs to 338 residues: Ketol-acid reductoisomerase (NADP(+)) (338 aa).

The KARI N-terminal Rossmann domain occupies 1–181 (MKVYYDKDAD…GGGRTGIIET (181 aa)). Residues 24 to 27 (YGSQ), R47, S50, S52, and 82 to 85 (DEFQ) each bind NADP(+). The active site involves H107. Residue G133 participates in NADP(+) binding. Residues 182–327 (TFKDETETDL…AKLRSMMPWI (146 aa)) form the KARI C-terminal knotted domain. Residues D190, E194, E226, and E230 each coordinate Mg(2+). S251 provides a ligand contact to substrate.

It belongs to the ketol-acid reductoisomerase family. Mg(2+) serves as cofactor.

The enzyme catalyses (2R)-2,3-dihydroxy-3-methylbutanoate + NADP(+) = (2S)-2-acetolactate + NADPH + H(+). The catalysed reaction is (2R,3R)-2,3-dihydroxy-3-methylpentanoate + NADP(+) = (S)-2-ethyl-2-hydroxy-3-oxobutanoate + NADPH + H(+). The protein operates within amino-acid biosynthesis; L-isoleucine biosynthesis; L-isoleucine from 2-oxobutanoate: step 2/4. It functions in the pathway amino-acid biosynthesis; L-valine biosynthesis; L-valine from pyruvate: step 2/4. Involved in the biosynthesis of branched-chain amino acids (BCAA). Catalyzes an alkyl-migration followed by a ketol-acid reduction of (S)-2-acetolactate (S2AL) to yield (R)-2,3-dihydroxy-isovalerate. In the isomerase reaction, S2AL is rearranged via a Mg-dependent methyl migration to produce 3-hydroxy-3-methyl-2-ketobutyrate (HMKB). In the reductase reaction, this 2-ketoacid undergoes a metal-dependent reduction by NADPH to yield (R)-2,3-dihydroxy-isovalerate. This Thiobacillus denitrificans (strain ATCC 25259 / T1) protein is Ketol-acid reductoisomerase (NADP(+)).